A 473-amino-acid polypeptide reads, in one-letter code: Spliceosome-associated protein CWC27 homolog (473 aa).

Ser2 bears the N-acetylserine mark. One can recognise a PPIase cyclophilin-type domain in the interval 11-166 (TNGKVLLKTT…NPHKIKSCEV (156 aa)). Residues 177-193 (REIKRPKKEKPEEEVKK) are compositionally biased toward basic and acidic residues. 2 disordered regions span residues 177-386 (REIK…EDQT) and 399-473 (QAIA…KERR). Residues 206-230 (SFGEEAEEEEEEVNRVSQSMKGKSK) are a coiled coil. A compositionally biased stretch (basic and acidic residues) spans 231 to 241 (SSHDLLKDDPH). Positions 257-266 (GDLDDGGEGE) are enriched in acidic residues. Basic and acidic residues-rich tracts occupy residues 267 to 287 (SAEHDEYIDGDEKNLMRERIA), 305 to 348 (EVEK…KRSE), and 360 to 372 (EYRREKQKYEALR). The stretch at 305 to 378 (EVEKKSVNRS…EALRKQQSKK (74 aa)) forms a coiled coil. Ser347 is modified (phosphoserine). Acidic residues predominate over residues 405–419 (PENDIPETEVEDDEG). Composition is skewed to basic and acidic residues over residues 426–438 (QFEDKSRKVKDAS) and 458–473 (RREESKKLMREKKERR).

It belongs to the cyclophilin-type PPIase family. In terms of assembly, part of the activated spliceosome B/catalytic step 1 spliceosome, one of the forms of the spliceosome which has a well-formed active site but still cannot catalyze the branching reaction and is composed at least of 52 proteins, the U2, U5 and U6 snRNAs and the pre-mRNA. Recruited during early steps of activated spliceosome B maturation, it is probably one of the first proteins released from this complex as he matures to the spliceosome C complex. Component of the minor spliceosome, which splices U12-type introns.

The protein localises to the nucleus. Its function is as follows. As part of the spliceosome, plays a role in pre-mRNA splicing. Probable inactive PPIase with no peptidyl-prolyl cis-trans isomerase activity. As a component of the minor spliceosome, involved in the splicing of U12-type introns in pre-mRNAs. The polypeptide is Spliceosome-associated protein CWC27 homolog (Pongo abelii (Sumatran orangutan)).